Here is a 37-residue protein sequence, read N- to C-terminus: Large ribosomal subunit protein bL36c (37 aa).

The protein belongs to the bacterial ribosomal protein bL36 family.

Its subcellular location is the plastid. It localises to the chloroplast. This chain is Large ribosomal subunit protein bL36c, found in Phalaenopsis aphrodite subsp. formosana (Moth orchid).